The chain runs to 329 residues: DNA-directed RNA polymerase subunit alpha (329 aa).

Residues 1-231 form an alpha N-terminal domain (alpha-NTD) region; sequence MQTNLLKPKT…EQLAVFAQLE (231 aa). Positions 249–329 are alpha C-terminal domain (alpha-CTD); that stretch reads FDPILLRPVD…SWPPAGLDKR (81 aa).

Belongs to the RNA polymerase alpha chain family. In terms of assembly, homodimer. The RNAP catalytic core consists of 2 alpha, 1 beta, 1 beta' and 1 omega subunit. When a sigma factor is associated with the core the holoenzyme is formed, which can initiate transcription.

The enzyme catalyses RNA(n) + a ribonucleoside 5'-triphosphate = RNA(n+1) + diphosphate. DNA-dependent RNA polymerase catalyzes the transcription of DNA into RNA using the four ribonucleoside triphosphates as substrates. This Polaromonas sp. (strain JS666 / ATCC BAA-500) protein is DNA-directed RNA polymerase subunit alpha.